A 634-amino-acid polypeptide reads, in one-letter code: Serine/threonine kinase NLK (634 aa).

Residues 240–531 (SQPDRPIGYG…VEEALQHRYL (292 aa)) form the Protein kinase domain. Residues 246–254 (IGYGAFGVV) and lysine 269 each bind ATP. Aspartate 366 acts as the Proton acceptor in catalysis.

Belongs to the protein kinase superfamily. CMGC Ser/Thr protein kinase family. MAP kinase subfamily. Component of the beta-catenin-lit-1 complex (also called the lit-1/wrm-1 complex or the wrm-1/lit-1 kinase complex) at least composed of lit-1 and wrm-1. Interacts with wrm-1 (via N-terminus); the interaction is direct and activates lit-1 kinase activity which leads to the phosphorylation of pop-1. This promotes pop-1 interaction with par-5 and translocation of pop-1 from the nucleus to the cytoplasm. Interacts with pop-1 (when phosphorylated on 'Ser-118' and 'Ser-127'); the interaction is dependent on the beta-catenin-lit-1 complex. Requires Mg(2+) as cofactor. As to expression, expressed in the pharynx and seam and vulval cells.

The protein localises to the cytoplasm. It localises to the cell cortex. It is found in the nucleus. It carries out the reaction L-seryl-[protein] + ATP = O-phospho-L-seryl-[protein] + ADP + H(+). The enzyme catalyses L-threonyl-[protein] + ATP = O-phospho-L-threonyl-[protein] + ADP + H(+). In terms of biological role, has a role in the Wnt signaling pathway controlling the asymmetry of cell divisions during embryogenesis. Operates in the AB and EMS cell lineages influencing cell specification. Required for body wall muscle development, endoderm development, pop-1 asymmetry and T-cell division asymmetry. Component of the beta-catenin-lit-1 complex which promotes the phosphorylation, down-regulation and subcellular relocation of pop-1. Regulates plp-1 nuclear localization in embryos. Plays a role in male tail tip morphogenesis. The sequence is that of Serine/threonine kinase NLK from Caenorhabditis elegans.